We begin with the raw amino-acid sequence, 2020 residues long: Metacaspase-2 (2020 aa).

Basic and acidic residues-rich tracts occupy residues 51 to 60 (SENDRNESIQ) and 69 to 78 (DNRKTNKSEK). Disordered stretches follow at residues 51–78 (SEND…KSEK) and 573–614 (RNGN…NINN). The segment covering 576 to 614 (NINNNKNNNINNNNNNINNNNNNINNNNNNINNNNNINN) has biased composition (low complexity).

Belongs to the peptidase C14B family.

Its subcellular location is the cytoplasm. With respect to regulation, ca(2+) does not appear to affect catalytic activity. Its function is as follows. Protease that cleaves specifically after arginine or lysine residues. May play a role in parasite growth and/or development. The chain is Metacaspase-2 from Plasmodium falciparum (isolate 3D7).